The primary structure comprises 366 residues: Autoinducer 2-binding periplasmic protein LuxP (366 aa).

A signal peptide spans 1 to 13; it reads MKKILLTCLLASA.

It belongs to the bacterial solute-binding protein 2 family.

It is found in the periplasm. Functionally, binds to an autoinducer molecule. This complex then interacts with the LuxQ sensor protein. The sequence is that of Autoinducer 2-binding periplasmic protein LuxP (luxP) from Vibrio vulnificus (strain CMCP6).